Reading from the N-terminus, the 393-residue chain is Branched-chain-amino-acid aminotransferase, mitochondrial (393 aa).

The transit peptide at 1–16 directs the protein to the mitochondrion; it reads MLQRHSLKLGKFSIRT. Lys-219 is modified (N6-(pyridoxal phosphate)lysine). Position 315 is a phosphothreonine (Thr-315).

It belongs to the class-IV pyridoxal-phosphate-dependent aminotransferase family. Pyridoxal 5'-phosphate is required as a cofactor.

The protein localises to the mitochondrion matrix. The catalysed reaction is L-leucine + 2-oxoglutarate = 4-methyl-2-oxopentanoate + L-glutamate. It carries out the reaction L-isoleucine + 2-oxoglutarate = (S)-3-methyl-2-oxopentanoate + L-glutamate. The enzyme catalyses L-valine + 2-oxoglutarate = 3-methyl-2-oxobutanoate + L-glutamate. It catalyses the reaction a 2-oxocarboxylate + L-methionine = 4-methylsulfanyl-2-oxobutanoate + an L-alpha-amino acid. It functions in the pathway amino-acid biosynthesis; L-isoleucine biosynthesis; L-isoleucine from 2-oxobutanoate: step 4/4. Its pathway is amino-acid biosynthesis; L-leucine biosynthesis; L-leucine from 3-methyl-2-oxobutanoate: step 4/4. It participates in amino-acid biosynthesis; L-valine biosynthesis; L-valine from pyruvate: step 4/4. The protein operates within amino-acid biosynthesis; L-methionine biosynthesis via salvage pathway; L-methionine from S-methyl-5-thio-alpha-D-ribose 1-phosphate: step 6/6. Mitochondrial isozyme of branched-chain-amino-acid aminotransferase, involved in the biosynthesis of the branched chain amino acids (BCAAs) leucine, isoleucine, and valine. Catalyzes the formation of methionine from 2-keto-4-methylthiobutyrate (KMTB) in the methionine salvage pathway primarily using BCAAs (leucine, isoleucine, and valine) as the amino donors. Appears to be involved in the regulation of the cell cycle, although this may be indirect via metabolic changes. Connects BCAAs and TCA-cycle metabolism governing TCA-cycle flux to activate TORC1 signaling. High copy suppressor of a temperature-sensitive mutation in the ABC transporter, ATM1. This is Branched-chain-amino-acid aminotransferase, mitochondrial from Saccharomyces cerevisiae (strain ATCC 204508 / S288c) (Baker's yeast).